Here is a 362-residue protein sequence, read N- to C-terminus: Phosphoserine aminotransferase (362 aa).

L-glutamate contacts are provided by Ser-9 and Arg-42. Pyridoxal 5'-phosphate contacts are provided by residues 76-77 (GR), Trp-102, Thr-153, Asp-174, and Gln-197. Lys-198 carries the N6-(pyridoxal phosphate)lysine modification. 239–240 (NT) serves as a coordination point for pyridoxal 5'-phosphate.

This sequence belongs to the class-V pyridoxal-phosphate-dependent aminotransferase family. SerC subfamily. In terms of assembly, homodimer. Pyridoxal 5'-phosphate is required as a cofactor.

It localises to the cytoplasm. It carries out the reaction O-phospho-L-serine + 2-oxoglutarate = 3-phosphooxypyruvate + L-glutamate. The enzyme catalyses 4-(phosphooxy)-L-threonine + 2-oxoglutarate = (R)-3-hydroxy-2-oxo-4-phosphooxybutanoate + L-glutamate. It participates in amino-acid biosynthesis; L-serine biosynthesis; L-serine from 3-phospho-D-glycerate: step 2/3. Its pathway is cofactor biosynthesis; pyridoxine 5'-phosphate biosynthesis; pyridoxine 5'-phosphate from D-erythrose 4-phosphate: step 3/5. Functionally, catalyzes the reversible conversion of 3-phosphohydroxypyruvate to phosphoserine and of 3-hydroxy-2-oxo-4-phosphonooxybutanoate to phosphohydroxythreonine. In Escherichia coli O7:K1 (strain IAI39 / ExPEC), this protein is Phosphoserine aminotransferase.